Consider the following 86-residue polypeptide: MEPVDPRLEPWKHPGSQPKTACTNCYCKKCCFHCQVCFITKALGISYGRKKRRQRRRAPQGSQTHQVSLSKQPTSQSRGDPTGPKE.

The interaction with human CREBBP stretch occupies residues 1 to 24; that stretch reads MEPVDPRLEPWKHPGSQPKTACTN. The tract at residues 1–48 is transactivation; it reads MEPVDPRLEPWKHPGSQPKTACTNCYCKKCCFHCQVCFITKALGISYG. Cys-22, Cys-25, and Cys-27 together coordinate Zn(2+). Residues 22-37 are cysteine-rich; it reads CTNCYCKKCCFHCQVC. N6-acetyllysine; by host PCAF is present on Lys-28. 4 residues coordinate Zn(2+): Cys-30, His-33, Cys-34, and Cys-37. The interval 38–48 is core; it reads FITKALGISYG. A compositionally biased stretch (basic residues) spans 48–58; sequence GRKKRRQRRRA. The tract at residues 48–86 is disordered; sequence GRKKRRQRRRAPQGSQTHQVSLSKQPTSQSRGDPTGPKE. A Nuclear localization signal, RNA-binding (TAR), and protein transduction motif is present at residues 49–57; that stretch reads RKKRRQRRR. Positions 49–86 are interaction with the host capping enzyme RNGTT; it reads RKKRRQRRRAPQGSQTHQVSLSKQPTSQSRGDPTGPKE. N6-acetyllysine; by host EP300 and GCN5L2 is present on residues Lys-50 and Lys-51. Arg-52 and Arg-53 each carry asymmetric dimethylarginine; by host PRMT6. Residues 60–79 are compositionally biased toward polar residues; the sequence is QGSQTHQVSLSKQPTSQSRG. Residue Lys-71 forms a Glycyl lysine isopeptide (Lys-Gly) (interchain with G-Cter in ubiquitin) linkage. The Cell attachment site signature appears at 78–80; the sequence is RGD.

Belongs to the lentiviruses Tat family. Interacts with host CCNT1. Associates with the P-TEFb complex composed at least of Tat, P-TEFb (CDK9 and CCNT1), TAR RNA, RNA Pol II. Recruits the HATs CREBBP, TAF1/TFIID, EP300, PCAF and GCN5L2. Interacts with host KAT5/Tip60; this interaction targets the latter to degradation. Interacts with the host deacetylase SIRT1. Interacts with host capping enzyme RNGTT; this interaction stimulates RNGTT. Binds to host KDR, and to the host integrins ITGAV/ITGB3 and ITGA5/ITGB1. Interacts with host KPNB1/importin beta-1 without previous binding to KPNA1/importin alpha-1. Interacts with EIF2AK2. Interacts with host nucleosome assembly protein NAP1L1; this interaction may be required for the transport of Tat within the nucleus, since the two proteins interact at the nuclear rim. Interacts with host C1QBP/SF2P32; this interaction involves lysine-acetylated Tat. Interacts with the host chemokine receptors CCR2, CCR3 and CXCR4. Interacts with host DPP4/CD26; this interaction may trigger an anti-proliferative effect. Interacts with host LDLR. Interacts with the host extracellular matrix metalloproteinase MMP1. Interacts with host PRMT6; this interaction mediates Tat's methylation. Interacts with, and is ubiquitinated by MDM2/Hdm2. Interacts with host PSMC3 and HTATIP2. Interacts with STAB1; this interaction may overcome SATB1-mediated repression of IL2 and IL2RA (interleukin) in T cells by binding to the same domain than HDAC1. Interacts (when acetylated) with human CDK13, thereby increasing HIV-1 mRNA splicing and promoting the production of the doubly spliced HIV-1 protein Nef. Interacts with host TBP; this interaction modulates the activity of transcriptional pre-initiation complex. Interacts with host RELA. Interacts with host PLSCR1; this interaction negatively regulates Tat transactivation activity by altering its subcellular distribution. Asymmetrical arginine methylation by host PRMT6 seems to diminish the transactivation capacity of Tat and affects the interaction with host CCNT1. In terms of processing, acetylation by EP300, CREBBP, GCN5L2/GCN5 and PCAF regulates the transactivation activity of Tat. EP300-mediated acetylation of Lys-50 promotes dissociation of Tat from the TAR RNA through the competitive binding to PCAF's bromodomain. In addition, the non-acetylated Tat's N-terminus can also interact with PCAF. PCAF-mediated acetylation of Lys-28 enhances Tat's binding to CCNT1. Lys-50 is deacetylated by SIRT1. Post-translationally, polyubiquitination by host MDM2 does not target Tat to degradation, but activates its transactivation function and fosters interaction with CCNT1 and TAR RNA. Phosphorylated by EIF2AK2 on serine and threonine residues adjacent to the basic region important for TAR RNA binding and function. Phosphorylation of Tat by EIF2AK2 is dependent on the prior activation of EIF2AK2 by dsRNA.

The protein localises to the host nucleus. The protein resides in the host nucleolus. It localises to the host cytoplasm. Its subcellular location is the secreted. Transcriptional activator that increases RNA Pol II processivity, thereby increasing the level of full-length viral transcripts. Recognizes a hairpin structure at the 5'-LTR of the nascent viral mRNAs referred to as the transactivation responsive RNA element (TAR) and recruits the cyclin T1-CDK9 complex (P-TEFb complex) that will in turn hyperphosphorylate the RNA polymerase II to allow efficient elongation. The CDK9 component of P-TEFb and other Tat-activated kinases hyperphosphorylate the C-terminus of RNA Pol II that becomes stabilized and much more processive. Other factors such as HTATSF1/Tat-SF1, SUPT5H/SPT5, and HTATIP2 are also important for Tat's function. Besides its effect on RNA Pol II processivity, Tat induces chromatin remodeling of proviral genes by recruiting the histone acetyltransferases (HATs) CREBBP, EP300 and PCAF to the chromatin. This also contributes to the increase in proviral transcription rate, especially when the provirus integrates in transcriptionally silent region of the host genome. To ensure maximal activation of the LTR, Tat mediates nuclear translocation of NF-kappa-B by interacting with host RELA. Through its interaction with host TBP, Tat may also modulate transcription initiation. Tat can reactivate a latently infected cell by penetrating in it and transactivating its LTR promoter. In the cytoplasm, Tat is thought to act as a translational activator of HIV-1 mRNAs. Its function is as follows. Extracellular circulating Tat can be endocytosed by surrounding uninfected cells via the binding to several surface receptors such as CD26, CXCR4, heparan sulfate proteoglycans (HSPG) or LDLR. Neurons are rarely infected, but they internalize Tat via their LDLR. Through its interaction with nuclear HATs, Tat is potentially able to control the acetylation-dependent cellular gene expression. Modulates the expression of many cellular genes involved in cell survival, proliferation or in coding for cytokines or cytokine receptors. Tat plays a role in T-cell and neurons apoptosis. Tat induced neurotoxicity and apoptosis probably contribute to neuroAIDS. Circulating Tat also acts as a chemokine-like and/or growth factor-like molecule that binds to specific receptors on the surface of the cells, affecting many cellular pathways. In the vascular system, Tat binds to ITGAV/ITGB3 and ITGA5/ITGB1 integrins dimers at the surface of endothelial cells and competes with bFGF for heparin-binding sites, leading to an excess of soluble bFGF. The polypeptide is Protein Tat (Human immunodeficiency virus type 1 group M subtype B (isolate PCV12) (HIV-1)).